The sequence spans 79 residues: Tungsten-containing formylmethanofuran dehydrogenase 2 subunit G (79 aa).

4Fe-4S ferredoxin-type domains lie at 2-31 and 51-79; these read VKIVIHEERCHGCGNCVIACPVNACNSPNV and TVSVINEDLCEACMTCELACPVDAIEIKT. Cys11, Cys14, Cys17, Cys21, Cys60, Cys63, Cys66, and Cys70 together coordinate [4Fe-4S] cluster.

The cofactor is [4Fe-4S] cluster.

It catalyses the reaction N-formylmethanofuran + 2 oxidized [2Fe-2S]-[ferredoxin] + H2O = methanofuran + 2 reduced [2Fe-2S]-[ferredoxin] + CO2 + H(+). It participates in one-carbon metabolism; methanogenesis from CO(2); 5,10-methenyl-5,6,7,8-tetrahydromethanopterin from CO(2): step 1/3. Its activity is regulated as follows. Not inactivated by cyanide. Catalyzes the reversible oxidation of CO(2) and methanofuran (MFR) to N-formylmethanofuran (CHO-MFR). This enzyme is oxygen-labile. May function as an electron transfer protein. The polypeptide is Tungsten-containing formylmethanofuran dehydrogenase 2 subunit G (fwdG) (Methanopyrus kandleri (strain AV19 / DSM 6324 / JCM 9639 / NBRC 100938)).